Here is a 425-residue protein sequence, read N- to C-terminus: Serine--tRNA ligase (425 aa).

2 disordered regions span residues 43 to 69 (QRSS…SDPK) and 108 to 134 (LPNL…WGKP). Over residues 117–134 (PEGRDENDNQERHRWGKP) the composition is skewed to basic and acidic residues. Residue 233 to 235 (TAE) participates in L-serine binding. Residue 264 to 266 (RRE) coordinates ATP. E287 is a binding site for L-serine. Residue 351–354 (EISS) participates in ATP binding. S385 is a binding site for L-serine.

This sequence belongs to the class-II aminoacyl-tRNA synthetase family. Type-1 seryl-tRNA synthetase subfamily. In terms of assembly, homodimer. The tRNA molecule binds across the dimer.

It is found in the cytoplasm. It catalyses the reaction tRNA(Ser) + L-serine + ATP = L-seryl-tRNA(Ser) + AMP + diphosphate + H(+). The catalysed reaction is tRNA(Sec) + L-serine + ATP = L-seryl-tRNA(Sec) + AMP + diphosphate + H(+). The protein operates within aminoacyl-tRNA biosynthesis; selenocysteinyl-tRNA(Sec) biosynthesis; L-seryl-tRNA(Sec) from L-serine and tRNA(Sec): step 1/1. Catalyzes the attachment of serine to tRNA(Ser). Is also able to aminoacylate tRNA(Sec) with serine, to form the misacylated tRNA L-seryl-tRNA(Sec), which will be further converted into selenocysteinyl-tRNA(Sec). This chain is Serine--tRNA ligase, found in Prochlorococcus marinus (strain MIT 9313).